The sequence spans 519 residues: ATP synthase subunit alpha 2 (519 aa).

ATP is bound at residue 179-186 (GDRQTGKT).

This sequence belongs to the ATPase alpha/beta chains family. F-type ATPases have 2 components, CF(1) - the catalytic core - and CF(0) - the membrane proton channel. CF(1) has five subunits: alpha(3), beta(3), gamma(1), delta(1), epsilon(1). CF(0) has three main subunits: a(1), b(2) and c(9-12). The alpha and beta chains form an alternating ring which encloses part of the gamma chain. CF(1) is attached to CF(0) by a central stalk formed by the gamma and epsilon chains, while a peripheral stalk is formed by the delta and b chains.

The protein localises to the cell inner membrane. The catalysed reaction is ATP + H2O + 4 H(+)(in) = ADP + phosphate + 5 H(+)(out). Functionally, produces ATP from ADP in the presence of a proton gradient across the membrane. The alpha chain is a regulatory subunit. This chain is ATP synthase subunit alpha 2, found in Syntrophus aciditrophicus (strain SB).